Reading from the N-terminus, the 159-residue chain is uncharacterized protein (159 aa).

Residues 4–24 form a helical membrane-spanning segment; sequence QIALILSLIILIFFIYKFAMF.

It is found in the membrane. This is an uncharacterized protein from Acheta domesticus (House cricket).